The chain runs to 506 residues: Voltage-gated potassium channel regulatory subunit KCNG4 (506 aa).

At 1-216 (MPMSSRDRDL…EMVEDPQSGL (216 aa)) the chain is on the cytoplasmic side. The chain crosses the membrane as a helical span at residues 217 to 238 (PGKVFACLSVLFVATTAVSLCV). Residues 239-259 (STMPDFRAEEGKGECTRKCYY) lie on the Extracellular side of the membrane. A helical membrane pass occupies residues 260 to 281 (IFVVESICVAWFSLEFCLRFVQ). The Cytoplasmic segment spans residues 282–292 (APNKCQFFRGP). Residues 293 to 312 (LNVIDILAISPYYVSLAVSD) form a helical membrane-spanning segment. Topologically, residues 313–326 (ESPEAGERPSSSSY) are extracellular. The helical; Voltage-sensor transmembrane segment at 327–351 (LEKVGLVLRVLRALRILYVMRLARH) threads the bilayer. At 352 to 366 (SLGLQTLGLTVRRCA) the chain is on the cytoplasmic side. A helical membrane pass occupies residues 367-388 (REFGLLMLFLAVAVTLFSPLVY). Over 389–403 (VAENESGRVLEFTSI) the chain is Extracellular. The helical intramembrane region spans 404–415 (PASYWWAIISMT). A Selectivity filter motif is present at residues 416-421 (TVGYGD). The stretch at 416–423 (TVGYGDMV) is an intramembrane region. Over 424 to 430 (PRSVPGQ) the chain is Extracellular. The chain crosses the membrane as a helical span at residues 431–459 (MVALSSILSGILIMAFPATSIFHTFSHSY). The Cytoplasmic portion of the chain corresponds to 460-506 (LELKREQEQVQARLRRLQNTNSASERELLSDVDDLVPEGLTSPGRYM).

This sequence belongs to the potassium channel family. G (TC 1.A.1.2) subfamily. Kv6.4/KCNG4 sub-subfamily. Heterotetramer with KCNB1. Does not form homomultimer.

The protein resides in the cell membrane. In terms of biological role, regulatory subunit of the voltage-gated potassium (Kv) channel which, when coassembled with KCNB1, modulates the kinetics parameters of the heterotetrameric channel namely the time course of activation, deactivation and inactivation and on the voltage-dependence of activation. Potassium channel subunit that does not form functional channels by itself. Reduces the deactivation rate. Modulates the threshold for activation by shifting by approximately 20 mV in hyperpolarizing direction. Markedly changes the inactivation by shifting the voltage dependence of inactivation by approximately 40 mV in hyperpolarizing direction. Acceleratee activation and enhances the time course of activation. This chain is Voltage-gated potassium channel regulatory subunit KCNG4, found in Mus musculus (Mouse).